A 114-amino-acid polypeptide reads, in one-letter code: Transmembrane protein 14DP (114 aa).

4 helical membrane passes run 8 to 28 (LVPL…GGIV), 36 to 56 (APSL…AYQL), 63 to 80 (VWDF…IMGM), and 83 to 103 (YYYG…LMAA).

This sequence belongs to the TMEM14 family.

The protein resides in the membrane. This chain is Transmembrane protein 14DP (TMEM14DP), found in Homo sapiens (Human).